The following is a 106-amino-acid chain: NADH-quinone oxidoreductase subunit K (106 aa).

The next 3 membrane-spanning stretches (helical) occupy residues 10–30, 35–55, and 67–87; these read IHYY…GVMV, VLIF…FVTF, and VVFF…AIVI.

This sequence belongs to the complex I subunit 4L family. In terms of assembly, NDH-1 is composed of 14 different subunits. Subunits NuoA, H, J, K, L, M, N constitute the membrane sector of the complex.

Its subcellular location is the cell inner membrane. The catalysed reaction is a quinone + NADH + 5 H(+)(in) = a quinol + NAD(+) + 4 H(+)(out). Its function is as follows. NDH-1 shuttles electrons from NADH, via FMN and iron-sulfur (Fe-S) centers, to quinones in the respiratory chain. The immediate electron acceptor for the enzyme in this species is believed to be ubiquinone. Couples the redox reaction to proton translocation (for every two electrons transferred, four hydrogen ions are translocated across the cytoplasmic membrane), and thus conserves the redox energy in a proton gradient. The chain is NADH-quinone oxidoreductase subunit K from Leptospira interrogans serogroup Icterohaemorrhagiae serovar copenhageni (strain Fiocruz L1-130).